The sequence spans 259 residues: ATP synthase subunit a (259 aa).

The propeptide at M1–N7 is removed in mature form. 5 helical membrane-spanning segments follow: residues F36–G56, Y95–V115, L125–F145, L164–K206, and I211–K253.

F-type ATP synthases have 2 components, the catalytic core F(1) and the membrane-embedded component F(0), linked together by a central stalk and a peripheral stalk. The central stalk, also called rotor shaft, is often seen as part of F(1). The peripheral stalk is seen as part of F(0). F(0) contains the membrane channel next to the rotor. F-type ATP synthases form dimers but each monomer functions independently in ATP generation. The dimer consists of 18 different polypeptides: ATP1 (subunit alpha, part of F(1), 3 molecules per monomer), ATP2 (subunit beta, part of F(1), 3 molecules per monomer), ATP3 (subunit gamma, part of the central stalk), ATP4 (subunit b, part of the peripheral stalk), ATP5/OSCP (subunit 5/OSCP, part of the peripheral stalk), ATP6 (subunit a, part of the peripheral stalk), ATP7 (subunit d, part of the peripheral stalk), ATP8 (subunit 8, part of the peripheral stalk), OLI1 (subunit c, part of the rotor, 10 molecules per monomer), ATP14 (subunit h, part of the peripheral stalk), ATP15 (subunit epsilon, part of the central stalk), ATP16 (subunit delta, part of the central stalk), ATP17 (subunit f, part of the peripheral stalk), ATP18 (subunit i/j, part of the peripheral stalk). Dimer-specific subunits are ATP19 (subunit k, at interface between monomers), ATP20 (subunit g, at interface between monomers), TIM11 (subunit e, at interface between monomers). Also contains subunit L.

It localises to the mitochondrion inner membrane. In terms of biological role, mitochondrial membrane ATP synthase (F(1)F(0) ATP synthase or Complex V) produces ATP from ADP in the presence of a proton gradient across the membrane which is generated by electron transport complexes of the respiratory chain. F-type ATP synthases consist of two structural domains, F(1) - containing the extramembraneous catalytic core, and F(0) - containing the membrane proton channel, linked together by a central stalk and a peripheral stalk. During catalysis, ATP synthesis in the catalytic domain of F(1) is coupled via a rotary mechanism of the central stalk subunits to proton translocation. Key component of the proton channel; it may play a direct role in the translocation of protons across the membrane. This chain is ATP synthase subunit a, found in Pichia angusta (Yeast).